The following is a 202-amino-acid chain: Transmembrane 4 L6 family member 1 (202 aa).

Topologically, residues 1–9 (MCYGKCARC) are cytoplasmic. The chain crosses the membrane as a helical span at residues 10–30 (IGHSLVGLALLCIAANILLYF). The Extracellular segment spans residues 31 to 49 (PNGETKYASENHLSRFVWF). A helical membrane pass occupies residues 50–70 (FSGIVGGGLLMLLPAFVFIGL). The Cytoplasmic segment spans residues 71–93 (EQDDCCGCCGHENCGKRCAMLSS). The chain crosses the membrane as a helical span at residues 94–114 (VLAALIGIAGSGYCVIVAALG). At 115-161 (LAEGPLCLDSLGQWNYTFASTEGQYLLDTSTWSECTEPKHIVEWNVS) the chain is on the extracellular side. N-linked (GlcNAc...) asparagine glycans are attached at residues Asn129 and Asn159. Residues 162–182 (LFSILLALGGIEFILCLIQVI) form a helical membrane-spanning segment. Topologically, residues 183–202 (NGVLGGICGFCCSHQQQYDC) are cytoplasmic.

It belongs to the L6 tetraspanin family. In terms of assembly, present in high molecular weight complexes in tumor cells. Interacts with SDCBP2. As to expression, highly expressed in lung, breast, colon and ovarian carcinomas. It is also present on some normal cells, endothelial cells in particular.

The protein localises to the membrane. The chain is Transmembrane 4 L6 family member 1 (TM4SF1) from Homo sapiens (Human).